The following is a 148-amino-acid chain: Lysozyme C (148 aa).

The first 18 residues, 1 to 18, serve as a signal peptide directing secretion; that stretch reads MKALIILGLVLLSVMVQA. The C-type lysozyme domain maps to 19–148; it reads KVFERCELAR…LRQYIQGCGV (130 aa). 4 disulfides stabilise this stretch: Cys24-Cys146, Cys48-Cys134, Cys83-Cys99, and Cys95-Cys113. Residues Glu53 and Asp71 contribute to the active site.

It belongs to the glycosyl hydrolase 22 family. As to quaternary structure, monomer.

The protein localises to the secreted. It catalyses the reaction Hydrolysis of (1-&gt;4)-beta-linkages between N-acetylmuramic acid and N-acetyl-D-glucosamine residues in a peptidoglycan and between N-acetyl-D-glucosamine residues in chitodextrins.. Its function is as follows. Lysozymes have primarily a bacteriolytic function; those in tissues and body fluids are associated with the monocyte-macrophage system and enhance the activity of immunoagents. The chain is Lysozyme C (LYZ) from Hylobates lar (Lar gibbon).